The sequence spans 264 residues: Thymidylate synthase (264 aa).

Arg21 serves as a coordination point for dUMP. His51 is a (6R)-5,10-methylene-5,6,7,8-tetrahydrofolate binding site. 126-127 lines the dUMP pocket; it reads RR. Cys146 serves as the catalytic Nucleophile. DUMP contacts are provided by residues 166 to 169, Asn177, and 207 to 209; these read RSAD and HIY. Asp169 provides a ligand contact to (6R)-5,10-methylene-5,6,7,8-tetrahydrofolate. Ala263 is a (6R)-5,10-methylene-5,6,7,8-tetrahydrofolate binding site.

It belongs to the thymidylate synthase family. Bacterial-type ThyA subfamily. In terms of assembly, homodimer.

Its subcellular location is the cytoplasm. It catalyses the reaction dUMP + (6R)-5,10-methylene-5,6,7,8-tetrahydrofolate = 7,8-dihydrofolate + dTMP. The protein operates within pyrimidine metabolism; dTTP biosynthesis. Functionally, catalyzes the reductive methylation of 2'-deoxyuridine-5'-monophosphate (dUMP) to 2'-deoxythymidine-5'-monophosphate (dTMP) while utilizing 5,10-methylenetetrahydrofolate (mTHF) as the methyl donor and reductant in the reaction, yielding dihydrofolate (DHF) as a by-product. This enzymatic reaction provides an intracellular de novo source of dTMP, an essential precursor for DNA biosynthesis. The polypeptide is Thymidylate synthase (Cupriavidus metallidurans (strain ATCC 43123 / DSM 2839 / NBRC 102507 / CH34) (Ralstonia metallidurans)).